Reading from the N-terminus, the 170-residue chain is Putative zinc finger protein 542 (170 aa).

The region spanning 1–42 (MLENYQNLVWLGLSISKSVISLLEKRKLPWIMAKEEIRGPLP) is the KRAB domain. C2H2-type zinc fingers lie at residues 98–120 (NVCKECGNLYCHNMQLTLHKRNH) and 126–148 (NQCLDCGKYFTRQSTLIQHQRIH). The C2H2-type 3; degenerate zinc finger occupies 154-170 (YKCNECIKTFNQRAHLT).

This sequence belongs to the krueppel C2H2-type zinc-finger protein family.

It localises to the nucleus. May be involved in transcriptional regulation. This chain is Putative zinc finger protein 542 (ZNF542P), found in Homo sapiens (Human).